The primary structure comprises 152 residues: Clitocypin-5 (152 aa).

Homodimer.

Binds and inhibits cysteine proteinases. Inhibits most strongly papain and cathepsin L, more weakly bromelain and cathepsin B while it is completely ineffective against cathepsin H. This is Clitocypin-5 (clt5) from Clitocybe nebularis (Clouded agaric).